Consider the following 72-residue polypeptide: UPF0495 protein KLLA0D04334g (72 aa).

Residues 20-42 (PVELTPLFLAMGVALASGTWFSY) traverse the membrane as a helical segment.

Belongs to the UPF0495 family.

Its subcellular location is the membrane. The sequence is that of UPF0495 protein KLLA0D04334g from Kluyveromyces lactis (strain ATCC 8585 / CBS 2359 / DSM 70799 / NBRC 1267 / NRRL Y-1140 / WM37) (Yeast).